Reading from the N-terminus, the 172-residue chain is 3-hydroxydecanoyl-[acyl-carrier-protein] dehydratase (172 aa).

Histidine 71 is an active-site residue.

It belongs to the thioester dehydratase family. FabA subfamily. As to quaternary structure, homodimer.

The protein localises to the cytoplasm. It carries out the reaction a (3R)-hydroxyacyl-[ACP] = a (2E)-enoyl-[ACP] + H2O. The enzyme catalyses (3R)-hydroxydecanoyl-[ACP] = (2E)-decenoyl-[ACP] + H2O. It catalyses the reaction (2E)-decenoyl-[ACP] = (3Z)-decenoyl-[ACP]. It functions in the pathway lipid metabolism; fatty acid biosynthesis. Its function is as follows. Necessary for the introduction of cis unsaturation into fatty acids. Catalyzes the dehydration of (3R)-3-hydroxydecanoyl-ACP to E-(2)-decenoyl-ACP and then its isomerization to Z-(3)-decenoyl-ACP. Can catalyze the dehydratase reaction for beta-hydroxyacyl-ACPs with saturated chain lengths up to 16:0, being most active on intermediate chain length. This Salmonella choleraesuis (strain SC-B67) protein is 3-hydroxydecanoyl-[acyl-carrier-protein] dehydratase.